The chain runs to 332 residues: Beta-hexosaminidase (332 aa).

Substrate-binding positions include D62, R70, R131, and 161-162 (KH). Residue H174 is the Proton donor/acceptor of the active site. The active-site Nucleophile is D244.

Belongs to the glycosyl hydrolase 3 family. NagZ subfamily.

The protein localises to the cytoplasm. It carries out the reaction Hydrolysis of terminal non-reducing N-acetyl-D-hexosamine residues in N-acetyl-beta-D-hexosaminides.. Its pathway is cell wall biogenesis; peptidoglycan recycling. Plays a role in peptidoglycan recycling by cleaving the terminal beta-1,4-linked N-acetylglucosamine (GlcNAc) from peptide-linked peptidoglycan fragments, giving rise to free GlcNAc, anhydro-N-acetylmuramic acid and anhydro-N-acetylmuramic acid-linked peptides. In Pseudomonas aeruginosa (strain LESB58), this protein is Beta-hexosaminidase.